The primary structure comprises 360 residues: MLLLLAEYLQQFHKGFAVFQYLTLRGILGVLTALALSLWLGPWMIRTLQVRQIGQAVRNDGPQSHLSKKGTPTMGGALILTAIAVSTLLWADLSNRYVWVVLAVTLLFGAIGWVDDYRKVIEKNSRGLPSRWKYFWQSVFGLAAAIFLYMTAQSPVETTLILPLLKDVSIPLGIGFVVLTYFVIVGSSNAVNLTDGLDGLAILPTVMVAGALAVFCYLSGNVNFAEYLLIPYVPGAGELIVFCAALVGAGLGFLWFNTYPAQVFMGDVGALALGAALGTIAVIVRQEVVLFIMGGVFVMETLSVIIQVASFKLTGKRVFRMAPIHHHFELKGWPEPRVIVRFWIITVILVLIGLATLKLR.

10 consecutive transmembrane segments (helical) span residues 25 to 45 (RGILGVLTALALSLWLGPWMI), 73 to 93 (TMGGALILTAIAVSTLLWADL), 97 to 117 (YVWVVLAVTLLFGAIGWVDDY), 132 to 152 (WKYFWQSVFGLAAAIFLYMTA), 168 to 188 (VSIPLGIGFVVLTYFVIVGSS), 199 to 219 (GLAILPTVMVAGALAVFCYLS), 236 to 256 (AGELIVFCAALVGAGLGFLWF), 263 to 283 (VFMGDVGALALGAALGTIAVI), 288 to 308 (VVLFIMGGVFVMETLSVIIQV), and 338 to 358 (VIVRFWIITVILVLIGLATLK).

Belongs to the glycosyltransferase 4 family. MraY subfamily. Mg(2+) is required as a cofactor.

Its subcellular location is the cell inner membrane. The enzyme catalyses UDP-N-acetyl-alpha-D-muramoyl-L-alanyl-gamma-D-glutamyl-meso-2,6-diaminopimeloyl-D-alanyl-D-alanine + di-trans,octa-cis-undecaprenyl phosphate = di-trans,octa-cis-undecaprenyl diphospho-N-acetyl-alpha-D-muramoyl-L-alanyl-D-glutamyl-meso-2,6-diaminopimeloyl-D-alanyl-D-alanine + UMP. Its pathway is cell wall biogenesis; peptidoglycan biosynthesis. In terms of biological role, catalyzes the initial step of the lipid cycle reactions in the biosynthesis of the cell wall peptidoglycan: transfers peptidoglycan precursor phospho-MurNAc-pentapeptide from UDP-MurNAc-pentapeptide onto the lipid carrier undecaprenyl phosphate, yielding undecaprenyl-pyrophosphoryl-MurNAc-pentapeptide, known as lipid I. This chain is Phospho-N-acetylmuramoyl-pentapeptide-transferase, found in Ectopseudomonas mendocina (strain ymp) (Pseudomonas mendocina).